The following is a 474-amino-acid chain: MKIKTRFSPSPTGLLHMGGVRTALYSWLFARKNNGSFILRIEDTDKNRVKNNSVQDILYGLRYLQLNWDEGPFFQSNRINIYKNIILFMLKKGIAYKCYCSKNRLDKLRKNQILNKKKPKYDNKCRNKNFFLKKSNIPYVIRFKNPTKGLVEFRDMIRGKISISNKELDDLVIQRSNGMPTYNFCVVVDDWQMNITHIIRGEDHIHNTPRQINLLSSLNAYIPQYAHTSMILDKKRKKLSKRCSSYSIINYINNGFIPEAILNYALQLGWSYKNQEIFSINEMKNIFNIKYINKSPSIIDKKKFLWFNHYYLNNISFNLKYKYFFSYCKKNNIFFDKDVNISGVIKDFLGRHSTFKDFIQTYDYFYKEINISNIKNIYLYNKLINITILKFLYKKFNLLNNWDLKNILLIIKESILYFKISFKEIAILIRIVITGKKQTPSISSIIFYIGKKKFLLRIKNFLKYLQLNNSNFSK.

Positions 9 to 19 (PSPTGLLHMGG) match the 'HIGH' region motif. A 'KMSKS' region motif is present at residues 238–242 (KLSKR). An ATP-binding site is contributed by Lys241.

Belongs to the class-I aminoacyl-tRNA synthetase family. Glutamate--tRNA ligase type 1 subfamily. Monomer.

It is found in the cytoplasm. The catalysed reaction is tRNA(Glu) + L-glutamate + ATP = L-glutamyl-tRNA(Glu) + AMP + diphosphate. Catalyzes the attachment of glutamate to tRNA(Glu) in a two-step reaction: glutamate is first activated by ATP to form Glu-AMP and then transferred to the acceptor end of tRNA(Glu). This is Glutamate--tRNA ligase from Buchnera aphidicola subsp. Cinara cedri (strain Cc).